A 213-amino-acid chain; its full sequence is ATP synthase peripheral stalk subunit OSCP, mitochondrial (213 aa).

A mitochondrion-targeting transit peptide spans 1–23 (MAAPAVSGLSRQVRYFSTSVVRP). The SIFI-degron motif lies at 5 to 23 (AVSGLSRQVRYFSTSVVRP). K54, K60, K70, and K73 each carry N6-acetyllysine. An N6-succinyllysine modification is found at K90. 2 positions are modified to N6-acetyllysine; alternate: K158 and K162. An N6-succinyllysine; alternate mark is found at K158 and K162. K172, K176, and K192 each carry N6-acetyllysine. K199 carries the post-translational modification N6-succinyllysine.

Belongs to the ATPase delta chain family. As to quaternary structure, component of the ATP synthase complex composed at least of ATP5F1A/subunit alpha, ATP5F1B/subunit beta, ATP5MC1/subunit c (homooctomer), MT-ATP6/subunit a, MT-ATP8/subunit 8, ATP5ME/subunit e, ATP5MF/subunit f, ATP5MG/subunit g, ATP5MK/subunit k, ATP5MJ/subunit j, ATP5F1C/subunit gamma, ATP5F1D/subunit delta, ATP5F1E/subunit epsilon, ATP5PF/subunit F6, ATP5PB/subunit b, ATP5PD/subunit d, ATP5PO/subunit OSCP. ATP synthase complex consists of a soluble F(1) head domain (subunits alpha(3) and beta(3)) - the catalytic core - and a membrane F(0) domain - the membrane proton channel (subunits c, a, 8, e, f, g, k and j). These two domains are linked by a central stalk (subunits gamma, delta, and epsilon) rotating inside the F1 region and a stationary peripheral stalk (subunits F6, b, d, and OSCP). In terms of processing, acetylation at Lys-162 decreases ATP production. Deacetylated by SIRT3. Post-translationally, in response to mitochondrial stress, the precursor protein is ubiquitinated by the SIFI complex in the cytoplasm before mitochondrial import, leading to its degradation. Within the SIFI complex, UBR4 initiates ubiquitin chain that are further elongated or branched by KCMF1.

It localises to the mitochondrion. It is found in the mitochondrion inner membrane. In terms of biological role, subunit OSCP, of the mitochondrial membrane ATP synthase complex (F(1)F(0) ATP synthase or Complex V) that produces ATP from ADP in the presence of a proton gradient across the membrane which is generated by electron transport complexes of the respiratory chain. ATP synthase complex consist of a soluble F(1) head domain - the catalytic core - and a membrane F(1) domain - the membrane proton channel. These two domains are linked by a central stalk rotating inside the F(1) region and a stationary peripheral stalk. During catalysis, ATP synthesis in the catalytic domain of F(1) is coupled via a rotary mechanism of the central stalk subunits to proton translocation. In vivo, can only synthesize ATP although its ATP hydrolase activity can be activated artificially in vitro. Part of the complex F(0) domain. Part of the complex F(0) domain and the peripheric stalk, which acts as a stator to hold the catalytic alpha(3)beta(3) subcomplex and subunit a/ATP6 static relative to the rotary elements. The protein is ATP synthase peripheral stalk subunit OSCP, mitochondrial of Plecturocebus moloch (Dusky titi monkey).